A 138-amino-acid polypeptide reads, in one-letter code: Transcriptional activator protein Pur-alpha (138 aa).

Residue Ser-70 is modified to Phosphoserine.

It belongs to the PUR DNA-binding protein family. In terms of assembly, homodimer, heterodimer with PURB and heterotrimer with PURB and YBX1/Y-box protein 1. Interacts with FMR1; this interaction occurs in association with polyribosome.

It localises to the nucleus. This is a probable transcription activator that specifically binds the purine-rich single strand of the PUR element located upstream of the c-Myc gene. May play a role in the initiation of DNA replication and in recombination. The protein is Transcriptional activator protein Pur-alpha of Rattus norvegicus (Rat).